The primary structure comprises 252 residues: Two-component response regulator ORR2 (252 aa).

The Response regulatory domain occupies 7 to 157 (RVLVVDDSPV…DVQRLRKCSG (151 aa)). The residue at position 90 (Asp90) is a 4-aspartylphosphate.

It belongs to the ARR family. Type-A subfamily. Two-component system major event consists of a His-to-Asp phosphorelay between a sensor histidine kinase (HK) and a response regulator (RR). In plants, the His-to-Asp phosphorelay involves an additional intermediate named Histidine-containing phosphotransfer protein (HPt). This multistep phosphorelay consists of a His-Asp-His-Asp sequential transfer of a phosphate group between first a His and an Asp of the HK protein, followed by the transfer to a conserved His of the HPt protein and finally the transfer to an Asp in the receiver domain of the RR protein. In terms of tissue distribution, expressed in mature leaves and flowers, and at low levels in roots and shoots.

Functionally, functions as a response regulator involved in His-to-Asp phosphorelay signal transduction system. Phosphorylation of the Asp residue in the receiver domain activates the ability of the protein to promote the transcription of target genes. Type-A response regulators seem to act as negative regulators of the cytokinin signaling. The protein is Two-component response regulator ORR2 of Oryza sativa subsp. indica (Rice).